The following is a 946-amino-acid chain: Zinc finger protein rotund (946 aa).

Disordered regions lie at residues glycine 10–aspartate 30 and phenylalanine 156–asparagine 269. The segment covering asparagine 161–valine 176 has biased composition (polar residues). Low complexity predominate over residues serine 177–proline 188. 2 stretches are compositionally biased toward polar residues: residues alanine 198–serine 230 and threonine 242–asparagine 269. 6 C2H2-type zinc fingers span residues tyrosine 488–histidine 510, tyrosine 517–histidine 539, tyrosine 545–histidine 567, tyrosine 573–histidine 597, phenylalanine 603–histidine 625, and histidine 634–histidine 656. The interval glycine 683–alanine 853 is disordered. 2 stretches are compositionally biased toward low complexity: residues histidine 739–glutamine 762 and histidine 770–glutamine 790. Residues threonine 813–glycine 822 show a composition bias toward polar residues. Residues glutamine 828 to isoleucine 841 show a composition bias toward basic and acidic residues.

This sequence belongs to the krueppel C2H2-type zinc-finger protein family. In terms of assembly, interacts with nab; which acts as a corepressor. Isoform rn and isoform roe are expressed in non-overlapping domains in the larval imaginal disks. Isoform rn is first expressed during the early third larval instar in the leg, wing, haltere and antennal part of the eye-antennal imaginal disk. It is observed as a ring in the leg and antenna disks and in the presumptive wing pouch and capitellum of wing and haltere disks respectively. In wing disk it is expressed in 3 concentric domains in the wing pouch. In late third instar, expression of isoform rn in the leg disk is no longer evident, but is maintained in the other disks. Isoform roe appears in the third instar and is confined to the eye part of the eye-antennal imaginal disk in a band of 4-6 cells at the morphogenetic furrow. There is no evidence of roe expression in other imaginal disks.

It localises to the nucleus. Transcription factor involved in imaginal disks development. Isoform rn is required in the wings, antenna, haltere, proboscis and legs disks, while isoform roe is required in the eye disk. Together with nab corepressor, it is involved in the initiation and maintenance of wingless (wg) expression in the wing hinge, by limiting the expression of wg to this compartment. Also required for the epithelial-mesenchymal transition branch of basolateral junctions signaling. This Drosophila melanogaster (Fruit fly) protein is Zinc finger protein rotund.